The sequence spans 128 residues: Dehydrin Xero 1 (128 aa).

Polar residues predominate over residues 1–19 (MESYQNQSGAQQTHQQLDQ). The disordered stretch occupies residues 1–128 (MESYQNQSGA…IKEKLPGGHH (128 aa)). 2 stretches are compositionally biased toward low complexity: residues 23–41 (PFPA…PAVA) and 48–60 (GMLH…SSSS). Residues 75–91 (GITEKIKEKLPGHHDSN) are compositionally biased toward basic and acidic residues. Over residues 92–104 (KTSSLGSTTTAYD) the composition is skewed to polar residues. Positions 107–128 (TVHHEKKGMMEKIKEKLPGGHH) are enriched in basic and acidic residues.

The protein belongs to the plant dehydrin family.

This Arabidopsis thaliana (Mouse-ear cress) protein is Dehydrin Xero 1 (XERO1).